Reading from the N-terminus, the 141-residue chain is Small ribosomal subunit protein uS9c (141 aa).

This sequence belongs to the universal ribosomal protein uS9 family.

Its subcellular location is the plastid. The protein resides in the chloroplast. This chain is Small ribosomal subunit protein uS9c (rps9), found in Tupiella akineta (Green alga).